We begin with the raw amino-acid sequence, 197 residues long: Recombination protein RecR (197 aa).

The C4-type zinc-finger motif lies at 57–72 (CSVCFAITEDDPCWIC). Positions 79 to 174 (GTICVVEEPQ…KVTRLAHGIP (96 aa)) constitute a Toprim domain.

This sequence belongs to the RecR family.

May play a role in DNA repair. It seems to be involved in an RecBC-independent recombinational process of DNA repair. It may act with RecF and RecO. This chain is Recombination protein RecR, found in Citrifermentans bemidjiense (strain ATCC BAA-1014 / DSM 16622 / JCM 12645 / Bem) (Geobacter bemidjiensis).